The following is a 637-amino-acid chain: tRNA 5-methylaminomethyl-2-thiouridine biosynthesis bifunctional protein MnmC (637 aa).

The interval 1–20 is disordered; that stretch reads MSERIEWLEDGTAGGSPYSP. Residues 1-232 form a tRNA (mnm(5)s(2)U34)-methyltransferase region; that stretch reads MSERIEWLED…KRDNLQGEYQ (232 aa). The segment at 255–637 is FAD-dependent cmnm(5)s(2)U34 oxidoreductase; sequence IGAGLAGSAV…YATRLQPSGS (383 aa).

This sequence in the N-terminal section; belongs to the methyltransferase superfamily. tRNA (mnm(5)s(2)U34)-methyltransferase family. In the C-terminal section; belongs to the DAO family. FAD serves as cofactor.

It is found in the cytoplasm. It catalyses the reaction 5-aminomethyl-2-thiouridine(34) in tRNA + S-adenosyl-L-methionine = 5-methylaminomethyl-2-thiouridine(34) in tRNA + S-adenosyl-L-homocysteine + H(+). Functionally, catalyzes the last two steps in the biosynthesis of 5-methylaminomethyl-2-thiouridine (mnm(5)s(2)U) at the wobble position (U34) in tRNA. Catalyzes the FAD-dependent demodification of cmnm(5)s(2)U34 to nm(5)s(2)U34, followed by the transfer of a methyl group from S-adenosyl-L-methionine to nm(5)s(2)U34, to form mnm(5)s(2)U34. The polypeptide is tRNA 5-methylaminomethyl-2-thiouridine biosynthesis bifunctional protein MnmC (Polaromonas naphthalenivorans (strain CJ2)).